The sequence spans 217 residues: Pyrrolidone-carboxylate peptidase (217 aa).

Active-site residues include Glu78, Cys141, and His168.

This sequence belongs to the peptidase C15 family. In terms of assembly, homotetramer.

It is found in the cytoplasm. The enzyme catalyses Release of an N-terminal pyroglutamyl group from a polypeptide, the second amino acid generally not being Pro.. In terms of biological role, removes 5-oxoproline from various penultimate amino acid residues except L-proline. The protein is Pyrrolidone-carboxylate peptidase of Treponema denticola (strain ATCC 35405 / DSM 14222 / CIP 103919 / JCM 8153 / KCTC 15104).